A 428-amino-acid chain; its full sequence is Serine--tRNA ligase (428 aa).

231–233 (TSE) provides a ligand contact to L-serine. Residues 262–264 (RRE) and Val-278 each bind ATP. Glu-285 is a binding site for L-serine. Residue 349 to 352 (ELTS) participates in ATP binding. Thr-384 is a binding site for L-serine.

It belongs to the class-II aminoacyl-tRNA synthetase family. Type-1 seryl-tRNA synthetase subfamily. In terms of assembly, homodimer. The tRNA molecule binds across the dimer.

It is found in the cytoplasm. The catalysed reaction is tRNA(Ser) + L-serine + ATP = L-seryl-tRNA(Ser) + AMP + diphosphate + H(+). It catalyses the reaction tRNA(Sec) + L-serine + ATP = L-seryl-tRNA(Sec) + AMP + diphosphate + H(+). It functions in the pathway aminoacyl-tRNA biosynthesis; selenocysteinyl-tRNA(Sec) biosynthesis; L-seryl-tRNA(Sec) from L-serine and tRNA(Sec): step 1/1. Functionally, catalyzes the attachment of serine to tRNA(Ser). Is also able to aminoacylate tRNA(Sec) with serine, to form the misacylated tRNA L-seryl-tRNA(Sec), which will be further converted into selenocysteinyl-tRNA(Sec). The protein is Serine--tRNA ligase of Bifidobacterium animalis subsp. lactis (strain AD011).